The primary structure comprises 207 residues: Outer-membrane lipoprotein LolB (207 aa).

The first 21 residues, 1 to 21 (MPLPDFRLIRLLPLAALVLTA), serve as a signal peptide directing secretion. Cysteine 22 carries N-palmitoyl cysteine lipidation. Cysteine 22 carries S-diacylglycerol cysteine lipidation.

This sequence belongs to the LolB family. Monomer.

The protein resides in the cell outer membrane. Plays a critical role in the incorporation of lipoproteins in the outer membrane after they are released by the LolA protein. This Shigella boydii serotype 18 (strain CDC 3083-94 / BS512) protein is Outer-membrane lipoprotein LolB.